A 77-amino-acid chain; its full sequence is Probable Fe(2+)-trafficking protein (77 aa).

Belongs to the Fe(2+)-trafficking protein family.

Functionally, could be a mediator in iron transactions between iron acquisition and iron-requiring processes, such as synthesis and/or repair of Fe-S clusters in biosynthetic enzymes. This is Probable Fe(2+)-trafficking protein from Baumannia cicadellinicola subsp. Homalodisca coagulata.